The following is a 520-amino-acid chain: MSTTAYPDTILIIDFGSQVTQLIARRVREANVYCEIVPFQSADEAFKRLQPKGVILSGSPHSTTDIGSPRAPQAIFDAGIPVLGICYGEQTMCAQLGGNVESGHDREFGRAFLDVQEDSPLFAGIWAKGTRHQVWMSHGDRVTSLPDGFTIIGTSPNAPYAVIADEKRKYYGVQFHPEVVHTPDGAKLLQNFVHRIVGVKPGWTMGAYREQAVEAIRKQVGSGKVICALSGGVDSSVAALLAHEAVGDQLTCILVDHGLMRKDEAQQVVEMFREHYNLPLILVDASDRFIGALEGESDPEKKRKTIGRLFIEVFEEEARKLGGADFLVQGTLYPDVIESVSFTGGPSVTIKSHHNVGGLPERMKMQLVEPLRELFKDEVRLLGKELGLPDSFIGRHPFPGPGLAIRCPGGVTRGKLEILREADAIYLDEIRKAGLYDAIWQAFAVLLPVQTVGVMGDGRTYEFVCALRAVTSVDGMTADFYHYDMNFLGNAATRIINEVRGINRVVYDVTSKPPGTIEWE.

The region spanning 9–202 (TILIIDFGSQ…VHRIVGVKPG (194 aa)) is the Glutamine amidotransferase type-1 domain. The Nucleophile role is filled by Cys86. Catalysis depends on residues His176 and Glu178. The GMPS ATP-PPase domain occupies 203-395 (WTMGAYREQA…LGLPDSFIGR (193 aa)). 230–236 (SGGVDSS) is a binding site for ATP.

Homodimer.

It carries out the reaction XMP + L-glutamine + ATP + H2O = GMP + L-glutamate + AMP + diphosphate + 2 H(+). Its pathway is purine metabolism; GMP biosynthesis; GMP from XMP (L-Gln route): step 1/1. Functionally, catalyzes the synthesis of GMP from XMP. This is GMP synthase [glutamine-hydrolyzing] from Brucella canis (strain ATCC 23365 / NCTC 10854 / RM-666).